We begin with the raw amino-acid sequence, 178 residues long: Large ribosomal subunit protein uL6 (178 aa).

Belongs to the universal ribosomal protein uL6 family. Part of the 50S ribosomal subunit.

Its function is as follows. This protein binds to the 23S rRNA, and is important in its secondary structure. It is located near the subunit interface in the base of the L7/L12 stalk, and near the tRNA binding site of the peptidyltransferase center. This chain is Large ribosomal subunit protein uL6, found in Buchnera aphidicola subsp. Schizaphis graminum (strain Sg).